We begin with the raw amino-acid sequence, 659 residues long: UvrABC system protein B (659 aa).

In terms of domain architecture, Helicase ATP-binding spans 27–414 (EGLEQNKKSQ…AHGEIVKQII (388 aa)). An ATP-binding site is contributed by 40–47 (GVTGSGKT). The Beta-hairpin motif lies at 93–116 (YFDYYRPEAYMPNTDTYIDKTTKS). One can recognise a Helicase C-terminal domain in the interval 432 to 594 (QVEDMFDEIQ…IIPKTIIKPI (163 aa)). The 36-residue stretch at 624–659 (EALVKDLRNQMLDASKQLNFERAAELRDIILELEAN) folds into the UVR domain.

Belongs to the UvrB family. Forms a heterotetramer with UvrA during the search for lesions. Interacts with UvrC in an incision complex.

It is found in the cytoplasm. In terms of biological role, the UvrABC repair system catalyzes the recognition and processing of DNA lesions. A damage recognition complex composed of 2 UvrA and 2 UvrB subunits scans DNA for abnormalities. Upon binding of the UvrA(2)B(2) complex to a putative damaged site, the DNA wraps around one UvrB monomer. DNA wrap is dependent on ATP binding by UvrB and probably causes local melting of the DNA helix, facilitating insertion of UvrB beta-hairpin between the DNA strands. Then UvrB probes one DNA strand for the presence of a lesion. If a lesion is found the UvrA subunits dissociate and the UvrB-DNA preincision complex is formed. This complex is subsequently bound by UvrC and the second UvrB is released. If no lesion is found, the DNA wraps around the other UvrB subunit that will check the other stand for damage. The polypeptide is UvrABC system protein B (Mycoplasma mobile (strain ATCC 43663 / 163K / NCTC 11711) (Mesomycoplasma mobile)).